The primary structure comprises 357 residues: Cytoplasmic tRNA 2-thiolation protein 1 (357 aa).

Positions 314–348 (GVSRTRGRRGEKAGLHPDVGRGGGGGSSGPAEVAS) are disordered. A compositionally biased stretch (basic and acidic residues) spans 321 to 332 (RRGEKAGLHPDV).

The protein belongs to the TtcA family. CTU1/NCS6/ATPBD3 subfamily.

The protein localises to the cytoplasm. The protein operates within tRNA modification; 5-methoxycarbonylmethyl-2-thiouridine-tRNA biosynthesis. In terms of biological role, plays a central role in 2-thiolation of mcm(5)S(2)U at tRNA wobble positions of tRNA(Lys), tRNA(Glu) and tRNA(Gln). Directly binds tRNAs and probably acts by catalyzing adenylation of tRNAs, an intermediate required for 2-thiolation. It is unclear whether it acts as a sulfurtransferase that transfers sulfur from thiocarboxylated URM1 onto the uridine of tRNAs at wobble position. This Chlamydomonas reinhardtii (Chlamydomonas smithii) protein is Cytoplasmic tRNA 2-thiolation protein 1.